The chain runs to 315 residues: tRNA dimethylallyltransferase (315 aa).

10 to 17 (GPTATGKS) provides a ligand contact to ATP. 12–17 (TATGKS) contributes to the substrate binding site. An interaction with substrate tRNA region spans residues 35 to 38 (DSMQ).

The protein belongs to the IPP transferase family. In terms of assembly, monomer. Mg(2+) is required as a cofactor.

The catalysed reaction is adenosine(37) in tRNA + dimethylallyl diphosphate = N(6)-dimethylallyladenosine(37) in tRNA + diphosphate. In terms of biological role, catalyzes the transfer of a dimethylallyl group onto the adenine at position 37 in tRNAs that read codons beginning with uridine, leading to the formation of N6-(dimethylallyl)adenosine (i(6)A). This chain is tRNA dimethylallyltransferase, found in Caldanaerobacter subterraneus subsp. tengcongensis (strain DSM 15242 / JCM 11007 / NBRC 100824 / MB4) (Thermoanaerobacter tengcongensis).